Reading from the N-terminus, the 87-residue chain is U3-theraphotoxin-Hhn1i (87 aa).

An N-terminal signal peptide occupies residues 1 to 24 (MVNMEASMFLTFAGLVLLFVVCYA). A propeptide spanning residues 25 to 52 (SESEEKEFPKEMLSSIFAVDNDFKQEER) is cleaved from the precursor. Cystine bridges form between C54/C67, C61/C72, and C66/C79.

Belongs to the neurotoxin 10 (Hwtx-1) family. 51 (Hntx-8) subfamily. Hntx-8 sub-subfamily. In terms of tissue distribution, expressed by the venom gland.

The protein localises to the secreted. Functionally, ion channel inhibitor. This is U3-theraphotoxin-Hhn1i from Cyriopagopus hainanus (Chinese bird spider).